We begin with the raw amino-acid sequence, 140 residues long: Methylglyoxal synthase (140 aa).

One can recognise an MGS-like domain in the interval 1–140 (MRSKPRIALI…DQAAADDAAP (140 aa)). Residues His12, Lys16, 38-41 (TGTT), and 58-59 (SG) contribute to the substrate site. Asp64 (proton donor/acceptor) is an active-site residue. His91 contacts substrate.

It belongs to the methylglyoxal synthase family.

The enzyme catalyses dihydroxyacetone phosphate = methylglyoxal + phosphate. In terms of biological role, catalyzes the formation of methylglyoxal from dihydroxyacetone phosphate. In Cupriavidus metallidurans (strain ATCC 43123 / DSM 2839 / NBRC 102507 / CH34) (Ralstonia metallidurans), this protein is Methylglyoxal synthase.